The sequence spans 220 residues: MADS-box protein AGL24 (220 aa).

The MADS-box domain occupies 1–61 (MAREKIRIKK…GKLFEFSSSR (61 aa)). In terms of domain architecture, K-box spans 87-177 (LRLENCNLSR…RDKLETLERA (91 aa)). Positions 190–200 (SVTTNVSSYDS) are enriched in polar residues. The segment at 190-220 (SVTTNVSSYDSGTPLEDDSDTSLKLGLPSWE) is disordered.

As to quaternary structure, interacts with IMK3/MRLK. Forms a homodimer and heterodimer with SOC1, AP1 and SVP through MADS-box domain. Interacts with the SEU-LUG corepressor complex when complexed to AP1. Interacts with AGL15 and AGL16. Post-translationally, phosphorylated by IMK3. Induced by vernalization. In terms of tissue distribution, mostly expressed in shoot apical meristems, including floral meristems. Also detected in stems, seedlings, leaves, flowers and siliques, and, to a lower extent, in roots.

It is found in the nucleus. The protein resides in the cytoplasm. Functionally, transcription activator that mediates floral transition in response to vernalization. Promotes inflorescence fate in apical meristems. Acts in a dosage-dependent manner. Probably involved in the transduction of RLK-mediated signaling (e.g. IMK3 pathway). Together with AP1 and SVP, controls the identity of the floral meristem and regulates expression of class B, C and E genes. When associated with SOC1, mediates effect of gibberellins on flowering under short-day conditions, and regulates the expression of LEAFY (LFY), which links floral induction and floral development. Confers inflorescence characteristics to floral primordia and early flowering. In Arabidopsis thaliana (Mouse-ear cress), this protein is MADS-box protein AGL24 (AGL24).